A 229-amino-acid polypeptide reads, in one-letter code: Large ribosomal subunit protein uL1 (229 aa).

It belongs to the universal ribosomal protein uL1 family. As to quaternary structure, part of the 50S ribosomal subunit.

Functionally, binds directly to 23S rRNA. The L1 stalk is quite mobile in the ribosome, and is involved in E site tRNA release. Protein L1 is also a translational repressor protein, it controls the translation of the L11 operon by binding to its mRNA. The chain is Large ribosomal subunit protein uL1 from Gemmatimonas aurantiaca (strain DSM 14586 / JCM 11422 / NBRC 100505 / T-27).